The chain runs to 252 residues: 3-deoxy-manno-octulosonate cytidylyltransferase (252 aa).

This sequence belongs to the KdsB family.

Its subcellular location is the cytoplasm. It catalyses the reaction 3-deoxy-alpha-D-manno-oct-2-ulosonate + CTP = CMP-3-deoxy-beta-D-manno-octulosonate + diphosphate. Its pathway is nucleotide-sugar biosynthesis; CMP-3-deoxy-D-manno-octulosonate biosynthesis; CMP-3-deoxy-D-manno-octulosonate from 3-deoxy-D-manno-octulosonate and CTP: step 1/1. It functions in the pathway bacterial outer membrane biogenesis; lipopolysaccharide biosynthesis. Functionally, activates KDO (a required 8-carbon sugar) for incorporation into bacterial lipopolysaccharide in Gram-negative bacteria. This chain is 3-deoxy-manno-octulosonate cytidylyltransferase, found in Rhodospirillum rubrum (strain ATCC 11170 / ATH 1.1.1 / DSM 467 / LMG 4362 / NCIMB 8255 / S1).